The chain runs to 452 residues: Probable ECA polymerase (452 aa).

The next 11 helical transmembrane spans lie at 6–26 (FSGL…LTWF), 37–57 (VFFS…TSVL), 63–83 (VGVA…CFYG), 118–138 (VILM…NGFL), 155–175 (GVAL…VYFL), 181–201 (AWLF…MIVG), 207–227 (IIIA…ISLW), 228–248 (MLAA…LKRY), 341–361 (LVVM…GLII), 378–398 (YKAA…IVLA), and 410–430 (VFFL…FWLF).

Belongs to the WzyE family. As to quaternary structure, probably part of a complex composed of WzxE, WzyE and WzzE.

It is found in the cell inner membrane. Its pathway is bacterial outer membrane biogenesis; enterobacterial common antigen biosynthesis. Its function is as follows. Probably involved in the polymerization of enterobacterial common antigen (ECA) trisaccharide repeat units. The polypeptide is Probable ECA polymerase (Salmonella choleraesuis (strain SC-B67)).